Reading from the N-terminus, the 289-residue chain is MAISQAVLATVFGILGNIISFFVCLAPIPTFVRIYKRKSSEGYQSIPYVISLFSAMLWMYYAMIKKDAMMLITINSFAFVVQIVYISLFFFYAPKKEKTLTVKFVLFVDVLGFGAIFVLTYFIIHANKRVQVLGYICMVFALSVFVAPLGIIRKVIKTKSAEFMPFGLSFFLTLSAVMWFFYGLLLKDMNIALPNVLGFIFGVLQMILFLIYKKPGTKVLEPPGIKLQDISEHVVDVVRLSTMVCNSQMRTLVPQDSADMEATIDIDEKIKGDIEKNKDEKEVFLISKN.

Residues 1-5 (MAISQ) are Extracellular-facing. The chain crosses the membrane as a helical span at residues 6–26 (AVLATVFGILGNIISFFVCLA). Positions 11–96 (VFGILGNIIS…SLFFFYAPKK (86 aa)) constitute a MtN3/slv 1 domain. Over 27 to 43 (PIPTFVRIYKRKSSEGY) the chain is Cytoplasmic. The helical transmembrane segment at 44–64 (QSIPYVISLFSAMLWMYYAMI) threads the bilayer. Over 65 to 70 (KKDAMM) the chain is Extracellular. Residues 71–91 (LITINSFAFVVQIVYISLFFF) traverse the membrane as a helical segment. The Cytoplasmic segment spans residues 92-103 (YAPKKEKTLTVK). Residues 104–124 (FVLFVDVLGFGAIFVLTYFII) traverse the membrane as a helical segment. Residues 125–131 (HANKRVQ) lie on the Extracellular side of the membrane. The MtN3/slv 2 domain maps to 131 to 214 (QVLGYICMVF…QMILFLIYKK (84 aa)). The helical transmembrane segment at 132 to 152 (VLGYICMVFALSVFVAPLGII) threads the bilayer. Residues 153 to 165 (RKVIKTKSAEFMP) are Cytoplasmic-facing. Residues 166 to 186 (FGLSFFLTLSAVMWFFYGLLL) traverse the membrane as a helical segment. Residues 187–190 (KDMN) are Extracellular-facing. Residues 191 to 211 (IALPNVLGFIFGVLQMILFLI) traverse the membrane as a helical segment. Topologically, residues 212 to 289 (YKKPGTKVLE…EKEVFLISKN (78 aa)) are cytoplasmic.

This sequence belongs to the SWEET sugar transporter family. As to quaternary structure, forms heterooligomers with SWEET8.

The protein localises to the cell membrane. Functionally, mediates both low-affinity uptake and efflux of sugar across the plasma membrane. The sequence is that of Bidirectional sugar transporter SWEET10 from Arabidopsis thaliana (Mouse-ear cress).